Consider the following 122-residue polypeptide: Large ribosomal subunit protein uL14 (122 aa).

This sequence belongs to the universal ribosomal protein uL14 family. In terms of assembly, part of the 50S ribosomal subunit. Forms a cluster with proteins L3 and L19. In the 70S ribosome, L14 and L19 interact and together make contacts with the 16S rRNA in bridges B5 and B8.

Binds to 23S rRNA. Forms part of two intersubunit bridges in the 70S ribosome. The chain is Large ribosomal subunit protein uL14 from Dechloromonas aromatica (strain RCB).